A 299-amino-acid polypeptide reads, in one-letter code: Deoxyribonuclease-1-like 2 (299 aa).

The first 20 residues, 1-20 (MGGPRALLAALWALEAAGTA), serve as a signal peptide directing secretion. Residues glutamate 99 and histidine 170 contribute to the active site. Residues cysteine 209 and cysteine 245 are joined by a disulfide bond.

The protein belongs to the DNase I family. The cofactor is Mg(2+). It depends on Ca(2+) as a cofactor. Preferentially expressed in the skin and up-regulated during keratinocytes differentiation. Highly abundant (at protein level) in the stratum granulosum.

The protein resides in the cytoplasm. Its subcellular location is the secreted. Functionally, divalent cation-dependent acid DNA endonuclease involved in the breakdown of the nucleus during corneocyte formation of epidermal keratinocytes. May play an immune role by eliminating harmful DNA released into the extracellular environment by damaged epidermal cells. This is Deoxyribonuclease-1-like 2 (DNASE1L2) from Homo sapiens (Human).